Reading from the N-terminus, the 956-residue chain is RNA-binding protein 44 (956 aa).

Residues Asp301–Val321 are disordered. An RRM domain is found at Ser750 to Gly824. Residues Lys831–Lys855 form a disordered region. The segment covering Ser840 to Thr854 has biased composition (basic and acidic residues).

Its subcellular location is the cytoplasm. Its function is as follows. Component of intercellular bridges during meiosis. Intercellular bridges are evolutionarily conserved structures that connect differentiating germ cells. Not required for fertility. This is RNA-binding protein 44 (rbm44) from Danio rerio (Zebrafish).